We begin with the raw amino-acid sequence, 262 residues long: Glucosamine-6-phosphate deaminase (262 aa).

Asp-63 (proton acceptor; for enolization step) is an active-site residue. Asn-129 acts as the For ring-opening step in catalysis. Residue His-131 is the Proton acceptor; for ring-opening step of the active site. Glu-136 acts as the For ring-opening step in catalysis.

Belongs to the glucosamine/galactosamine-6-phosphate isomerase family. NagB subfamily.

It carries out the reaction alpha-D-glucosamine 6-phosphate + H2O = beta-D-fructose 6-phosphate + NH4(+). The protein operates within amino-sugar metabolism; N-acetylneuraminate degradation; D-fructose 6-phosphate from N-acetylneuraminate: step 5/5. Its function is as follows. Catalyzes the reversible isomerization-deamination of glucosamine 6-phosphate (GlcN6P) to form fructose 6-phosphate (Fru6P) and ammonium ion. The protein is Glucosamine-6-phosphate deaminase of Bacillus cereus (strain ZK / E33L).